The sequence spans 266 residues: tRNA pseudouridine synthase A (266 aa).

Asp52 functions as the Nucleophile in the catalytic mechanism. Tyr113 lines the substrate pocket.

Belongs to the tRNA pseudouridine synthase TruA family. As to quaternary structure, homodimer.

The catalysed reaction is uridine(38/39/40) in tRNA = pseudouridine(38/39/40) in tRNA. Functionally, formation of pseudouridine at positions 38, 39 and 40 in the anticodon stem and loop of transfer RNAs. This is tRNA pseudouridine synthase A from Agrobacterium fabrum (strain C58 / ATCC 33970) (Agrobacterium tumefaciens (strain C58)).